The chain runs to 746 residues: Alpha-1,4-glucan:maltose-1-phosphate maltosyltransferase (746 aa).

Positions 1–43 (MAAVQHRATTRTSNTDNSTTKTKSKATSARKSPATKRKRVSAE) are disordered. The segment covering 10-32 (TRTSNTDNSTTKTKSKATSARKS) has biased composition (low complexity). 3 residues coordinate alpha-maltose 1-phosphate: Lys-343, Gln-403, and Asp-438. The active-site Nucleophile is the Asp-473. Asn-474 is an alpha-maltose 1-phosphate binding site. Glu-502 acts as the Proton donor in catalysis. An alpha-maltose 1-phosphate-binding site is contributed by 612–613 (KY).

Belongs to the glycosyl hydrolase 13 family. GlgE subfamily. Homodimer.

It carries out the reaction alpha-maltose 1-phosphate + [(1-&gt;4)-alpha-D-glucosyl](n) = [(1-&gt;4)-alpha-D-glucosyl](n+2) + phosphate. Functionally, maltosyltransferase that uses maltose 1-phosphate (M1P) as the sugar donor to elongate linear or branched alpha-(1-&gt;4)-glucans. Is involved in a branched alpha-glucan biosynthetic pathway from trehalose, together with TreS, Mak and GlgB. The polypeptide is Alpha-1,4-glucan:maltose-1-phosphate maltosyltransferase (Bifidobacterium longum (strain NCC 2705)).